A 785-amino-acid polypeptide reads, in one-letter code: Endonuclease MutS2 (785 aa).

335 to 342 (GPNTGGKT) lines the ATP pocket. Residues 710–785 (LDLRGERYED…GNGVTIVEFK (76 aa)) enclose the Smr domain.

Belongs to the DNA mismatch repair MutS family. MutS2 subfamily. In terms of assembly, homodimer. Binds to stalled ribosomes, contacting rRNA.

Its function is as follows. Endonuclease that is involved in the suppression of homologous recombination and thus may have a key role in the control of bacterial genetic diversity. Functionally, acts as a ribosome collision sensor, splitting the ribosome into its 2 subunits. Detects stalled/collided 70S ribosomes which it binds and splits by an ATP-hydrolysis driven conformational change. Acts upstream of the ribosome quality control system (RQC), a ribosome-associated complex that mediates the extraction of incompletely synthesized nascent chains from stalled ribosomes and their subsequent degradation. Probably generates substrates for RQC. This is Endonuclease MutS2 from Listeria monocytogenes serotype 4b (strain F2365).